The primary structure comprises 116 residues: Ribonuclease P protein component (116 aa).

It belongs to the RnpA family. Consists of a catalytic RNA component (M1 or rnpB) and a protein subunit.

It carries out the reaction Endonucleolytic cleavage of RNA, removing 5'-extranucleotides from tRNA precursor.. RNaseP catalyzes the removal of the 5'-leader sequence from pre-tRNA to produce the mature 5'-terminus. It can also cleave other RNA substrates such as 4.5S RNA. The protein component plays an auxiliary but essential role in vivo by binding to the 5'-leader sequence and broadening the substrate specificity of the ribozyme. This is Ribonuclease P protein component from Geobacter sp. (strain M21).